Here is a 190-residue protein sequence, read N- to C-terminus: Holliday junction branch migration complex subunit RuvA (190 aa).

Residues 1-65 (MIGNLRGIVD…ENVTQLYGFI (65 aa)) are domain I. Residues 66–143 (SKEEQQCLRL…KLEINNNHFH (78 aa)) are domain II. Residues 144 to 147 (SISE) are flexible linker. The tract at residues 147 to 190 (EDALSALINLGYERTKAYDTIKKIEDESPNLDTKDIIRMALKTI) is domain III.

Belongs to the RuvA family. Homotetramer. Forms an RuvA(8)-RuvB(12)-Holliday junction (HJ) complex. HJ DNA is sandwiched between 2 RuvA tetramers; dsDNA enters through RuvA and exits via RuvB. An RuvB hexamer assembles on each DNA strand where it exits the tetramer. Each RuvB hexamer is contacted by two RuvA subunits (via domain III) on 2 adjacent RuvB subunits; this complex drives branch migration. In the full resolvosome a probable DNA-RuvA(4)-RuvB(12)-RuvC(2) complex forms which resolves the HJ.

The protein localises to the cytoplasm. In terms of biological role, the RuvA-RuvB-RuvC complex processes Holliday junction (HJ) DNA during genetic recombination and DNA repair, while the RuvA-RuvB complex plays an important role in the rescue of blocked DNA replication forks via replication fork reversal (RFR). RuvA specifically binds to HJ cruciform DNA, conferring on it an open structure. The RuvB hexamer acts as an ATP-dependent pump, pulling dsDNA into and through the RuvAB complex. HJ branch migration allows RuvC to scan DNA until it finds its consensus sequence, where it cleaves and resolves the cruciform DNA. In Wolbachia pipientis subsp. Culex pipiens (strain wPip), this protein is Holliday junction branch migration complex subunit RuvA.